We begin with the raw amino-acid sequence, 171 residues long: Inosine/xanthosine triphosphatase (171 aa).

Substrate is bound at residue 8–13 (TTNPAK). Mg(2+)-binding residues include Asp-38 and Gln-68.

It belongs to the YjjX NTPase family. As to quaternary structure, homodimer. It depends on Mg(2+) as a cofactor. Mn(2+) is required as a cofactor.

It catalyses the reaction XTP + H2O = XDP + phosphate + H(+). It carries out the reaction ITP + H2O = IDP + phosphate + H(+). Its function is as follows. Phosphatase that hydrolyzes non-canonical purine nucleotides such as XTP and ITP to their respective diphosphate derivatives. Probably excludes non-canonical purines from DNA/RNA precursor pool, thus preventing their incorporation into DNA/RNA and avoiding chromosomal lesions. This Cronobacter sakazakii (strain ATCC BAA-894) (Enterobacter sakazakii) protein is Inosine/xanthosine triphosphatase.